The primary structure comprises 297 residues: HTH-type transcriptional regulator IlvY (297 aa).

One can recognise an HTH lysR-type domain in the interval 1–58; that stretch reads MDLRDLKTFLHLAESRHFGRSARAMHVSPSTLSRQIQRLEEDLGQPLFVRDNRTVTLT. The segment at residues 18-37 is a DNA-binding region (H-T-H motif); it reads FGRSARAMHVSPSTLSRQIQ.

The protein belongs to the LysR transcriptional regulatory family.

The protein resides in the cytoplasm. This protein activates the transcription of the ilvC gene in the presence of acetolactate or acetohydroxybutyrate. IlvY is also a negative regulator of its own expression. This is HTH-type transcriptional regulator IlvY (ilvY) from Escherichia coli (strain K12).